Here is a 92-residue protein sequence, read N- to C-terminus: CRISPR-associated endoribonuclease Cas2 3 (92 aa).

Asp9 is a binding site for Mg(2+).

It belongs to the CRISPR-associated endoribonuclease Cas2 protein family. Homodimer, forms a heterotetramer with a Cas1 homodimer. The cofactor is Mg(2+).

Functionally, CRISPR (clustered regularly interspaced short palindromic repeat), is an adaptive immune system that provides protection against mobile genetic elements (viruses, transposable elements and conjugative plasmids). CRISPR clusters contain sequences complementary to antecedent mobile elements and target invading nucleic acids. CRISPR clusters are transcribed and processed into CRISPR RNA (crRNA). Functions as a ssRNA-specific endoribonuclease. Involved in the integration of spacer DNA into the CRISPR cassette. The protein is CRISPR-associated endoribonuclease Cas2 3 of Synechocystis sp. (strain ATCC 27184 / PCC 6803 / Kazusa).